The following is a 564-amino-acid chain: Glutamyl-tRNA(Gln) amidotransferase subunit B, mitochondrial (564 aa).

The transit peptide at 1–88 (MIRQCVSHRG…DTDAKLFSRA (88 aa)) directs the protein to the mitochondrion. Residues 26–63 (PFHHPSPRPLGRKNWSTSDEAKSKRAAMRKGGAPPPEH) are disordered.

Belongs to the GatB/GatE family. GatB subfamily. Subunit of the heterotrimeric GatCAB amidotransferase (AdT) complex, composed of A, B and C subunits.

The protein resides in the mitochondrion. It catalyses the reaction L-glutamyl-tRNA(Gln) + L-glutamine + ATP + H2O = L-glutaminyl-tRNA(Gln) + L-glutamate + ADP + phosphate + H(+). Allows the formation of correctly charged Gln-tRNA(Gln) through the transamidation of misacylated Glu-tRNA(Gln) in the mitochondria. The reaction takes place in the presence of glutamine and ATP through an activated gamma-phospho-Glu-tRNA(Gln). In Ajellomyces capsulatus (strain G186AR / H82 / ATCC MYA-2454 / RMSCC 2432) (Darling's disease fungus), this protein is Glutamyl-tRNA(Gln) amidotransferase subunit B, mitochondrial.